The sequence spans 549 residues: Manganese transporter SMF2 (549 aa).

The interval 1–23 (MTSQEYEPIQWSDESQTNNDSVN) is disordered. Residues 12-22 (SDESQTNNDSV) are compositionally biased toward polar residues. The next 8 membrane-spanning stretches (helical) occupy residues 91–109 (LLFSVLVSNFMAAFWQYLC), 130–147 (FGLNITLYILAEMAIIAT), 161–185 (ILFHIPLALGVILTVVDVLIVLLAY), 196–214 (IFEAFVSLLVVLTVVCFTV), 312–332 (LLISLFTVALFVNCAILIVSG), 350–372 (IYNLLCSTLSKGAGTVFVLALLF), 432–452 (ASQVVLSLLLPFVSAPLLYFT), and 521–541 (VLAIIVWLIISGLNFYMLLGF).

Belongs to the NRAMP family.

The protein localises to the vacuole lumen. It is found in the vesicle. The protein resides in the cell membrane. It catalyses the reaction Mn(2+)(in) = Mn(2+)(out). In terms of biological role, high-affinity manganese transporter involved in manganese uptake from the extracellular environment. The sequence is that of Manganese transporter SMF2 (SMF2) from Saccharomyces cerevisiae (strain ATCC 204508 / S288c) (Baker's yeast).